A 251-amino-acid chain; its full sequence is Intermembrane phospholipid transport system lipoprotein MlaA (251 aa).

A signal peptide spans 1–17 (MKLRLSALALGTTLLVG). Cys-18 carries the N-palmitoyl cysteine lipid modification. Cys-18 carries S-diacylglycerol cysteine lipidation. The disordered stretch occupies residues 228–251 (GELKPQENPNAQAIQDDLKDIDSE).

The protein belongs to the MlaA family.

The protein localises to the cell outer membrane. Functionally, involved in a phospholipid transport pathway that maintains lipid asymmetry in the outer membrane by retrograde trafficking of phospholipids from the outer membrane to the inner membrane. Required for intercellular spreading of S.flexneri. The chain is Intermembrane phospholipid transport system lipoprotein MlaA from Shigella flexneri.